Consider the following 200-residue polypeptide: MKNKADNKKRNFLTHSEIESLLKAANTGPHAARNYCLTLLCFIHGFRASEICRLRISDIDLKAKCIYIHRLKKGFSTTHPLLNKEVQALKNWLSIRTSYPHAESEWVFLSRKGNPLSRQQFYHIISTSGGNAGLSLEIHPHMLRHSCGFALANMGIDTRLIQDYLGHRNIRHTVWYTASNAGRFYGIWDRARGRQRHAVL.

The 182-residue stretch at 8 to 189 (KKRNFLTHSE…NAGRFYGIWD (182 aa)) folds into the Tyr recombinase domain. Residues arginine 47, lysine 72, histidine 141, arginine 144, and histidine 167 contribute to the active site. Catalysis depends on tyrosine 176, which acts as the O-(3'-phospho-DNA)-tyrosine intermediate.

This sequence belongs to the 'phage' integrase family.

Its function is as follows. FimB is one of the 2 regulatory proteins which control the phase variation of type 1 fimbriae in E.coli. These proteins mediate the periodic inversion of a 300bp DNA segment that harbors the promoter for the fimbrial structural gene, fimA. FimB switches fimA on. In Escherichia coli O157:H7, this protein is Type 1 fimbriae regulatory protein FimB (fimB).